A 200-amino-acid polypeptide reads, in one-letter code: Peptidyl-tRNA hydrolase (200 aa).

Residue Phe-16 participates in tRNA binding. His-21 (proton acceptor) is an active-site residue. The tRNA site is built by Phe-67, Asn-69, and Asn-115.

The protein belongs to the PTH family. As to quaternary structure, monomer.

Its subcellular location is the cytoplasm. It carries out the reaction an N-acyl-L-alpha-aminoacyl-tRNA + H2O = an N-acyl-L-amino acid + a tRNA + H(+). Its function is as follows. Hydrolyzes ribosome-free peptidyl-tRNAs (with 1 or more amino acids incorporated), which drop off the ribosome during protein synthesis, or as a result of ribosome stalling. In terms of biological role, catalyzes the release of premature peptidyl moieties from peptidyl-tRNA molecules trapped in stalled 50S ribosomal subunits, and thus maintains levels of free tRNAs and 50S ribosomes. The polypeptide is Peptidyl-tRNA hydrolase (Prochlorococcus marinus (strain MIT 9215)).